A 334-amino-acid chain; its full sequence is Cathepsin J (334 aa).

The first 17 residues, 1 to 17 (MTPTVLLLILCFGVASG), serve as a signal peptide directing secretion. Positions 18–113 (AQAHDPKLDA…PHAQNHVSIG (96 aa)) are cleaved as a propeptide — activation peptide. Asn-72 carries an N-linked (GlcNAc...) asparagine glycan. Intrachain disulfides connect Cys-135/Cys-178 and Cys-169/Cys-211. Cys-138 is a catalytic residue. N-linked (GlcNAc...) asparagine glycosylation is found at Asn-217, Asn-221, and Asn-268. Cys-269 and Cys-322 form a disulfide bridge. Active-site residues include His-276 and Asn-300.

The protein belongs to the peptidase C1 family. In terms of tissue distribution, expressed specifically in placenta.

Its subcellular location is the lysosome. The protein is Cathepsin J (Ctsj) of Mus musculus (Mouse).